A 209-amino-acid polypeptide reads, in one-letter code: A-type ATP synthase subunit D (209 aa).

Belongs to the V-ATPase D subunit family. As to quaternary structure, has multiple subunits with at least A(3), B(3), C, D, E, F, H, I and proteolipid K(x).

Its subcellular location is the cell membrane. Functionally, component of the A-type ATP synthase that produces ATP from ADP in the presence of a proton gradient across the membrane. The polypeptide is A-type ATP synthase subunit D (Archaeoglobus fulgidus (strain ATCC 49558 / DSM 4304 / JCM 9628 / NBRC 100126 / VC-16)).